The following is a 246-amino-acid chain: Probable transcriptional regulatory protein Dole_0371 (246 aa).

This sequence belongs to the TACO1 family.

The protein localises to the cytoplasm. The sequence is that of Probable transcriptional regulatory protein Dole_0371 from Desulfosudis oleivorans (strain DSM 6200 / JCM 39069 / Hxd3) (Desulfococcus oleovorans).